We begin with the raw amino-acid sequence, 862 residues long: Active breakpoint cluster region-related protein (862 aa).

The tract at residues Tyr29 to Glu84 is disordered. Basic and acidic residues predominate over residues Asn34–Ser44. A compositionally biased stretch (polar residues) spans Pro54–Ser67. The DH domain occupies Met93–Asp286. The PH domain maps to Gln303–Lys462. The region spanning Val488–Ile616 is the C2 domain. Positions Val650–Phe848 constitute a Rho-GAP domain.

The protein resides in the cell projection. Its subcellular location is the dendritic spine. The protein localises to the axon. It is found in the synapse. Its function is as follows. Protein with a unique structure having two opposing regulatory activities toward small GTP-binding proteins. The C-terminus is a GTPase-activating protein domain which stimulates GTP hydrolysis by RAC1, RAC2 and CDC42. Accelerates the intrinsic rate of GTP hydrolysis of RAC1 or CDC42, leading to down-regulation of the active GTP-bound form. The central Dbl homology (DH) domain functions as guanine nucleotide exchange factor (GEF) that modulates the GTPases CDC42, RHOA and RAC1. Promotes the conversion of CDC42, RHOA and RAC1 from the GDP-bound to the GTP-bound form. The sequence is that of Active breakpoint cluster region-related protein (abr) from Xenopus laevis (African clawed frog).